Here is a 479-residue protein sequence, read N- to C-terminus: tRNA modification GTPase MnmE (479 aa).

3 residues coordinate (6S)-5-formyl-5,6,7,8-tetrahydrofolate: Arg-30, Glu-91, and Lys-130. Positions 226–402 (GFRIVLTGLP…VLKDLVKEFA (177 aa)) constitute a TrmE-type G domain. Asn-236 contributes to the K(+) binding site. GTP is bound by residues 236-241 (NVGKSS), 255-261 (TDIPGTT), and 280-283 (DTAG). Ser-240 provides a ligand contact to Mg(2+). Thr-255, Ile-257, and Thr-260 together coordinate K(+). Thr-261 contacts Mg(2+). A (6S)-5-formyl-5,6,7,8-tetrahydrofolate-binding site is contributed by Lys-479.

The protein belongs to the TRAFAC class TrmE-Era-EngA-EngB-Septin-like GTPase superfamily. TrmE GTPase family. In terms of assembly, homodimer. Heterotetramer of two MnmE and two MnmG subunits. K(+) serves as cofactor.

It is found in the cytoplasm. Functionally, exhibits a very high intrinsic GTPase hydrolysis rate. Involved in the addition of a carboxymethylaminomethyl (cmnm) group at the wobble position (U34) of certain tRNAs, forming tRNA-cmnm(5)s(2)U34. The chain is tRNA modification GTPase MnmE from Bdellovibrio bacteriovorus (strain ATCC 15356 / DSM 50701 / NCIMB 9529 / HD100).